A 62-amino-acid polypeptide reads, in one-letter code: Photosystem II reaction center protein Z (62 aa).

2 consecutive transmembrane segments (helical) span residues 8–28 and 41–61; these read AVFA…VVFA and FSGT…NSLI.

This sequence belongs to the PsbZ family. As to quaternary structure, PSII is composed of 1 copy each of membrane proteins PsbA, PsbB, PsbC, PsbD, PsbE, PsbF, PsbH, PsbI, PsbJ, PsbK, PsbL, PsbM, PsbT, PsbY, PsbZ, Psb30/Ycf12, at least 3 peripheral proteins of the oxygen-evolving complex and a large number of cofactors. It forms dimeric complexes.

The protein resides in the plastid. Its subcellular location is the chloroplast thylakoid membrane. Functionally, may control the interaction of photosystem II (PSII) cores with the light-harvesting antenna, regulates electron flow through the 2 photosystem reaction centers. PSII is a light-driven water plastoquinone oxidoreductase, using light energy to abstract electrons from H(2)O, generating a proton gradient subsequently used for ATP formation. The protein is Photosystem II reaction center protein Z of Oenothera elata subsp. hookeri (Hooker's evening primrose).